Here is a 477-residue protein sequence, read N- to C-terminus: PTS system glucose-specific EIICB component (477 aa).

Residues 1-14 (MFKNAFANLQKVGK) are Cytoplasmic-facing. The region spanning 1-388 (MFKNAFANLQ…LDLKTPGRED (388 aa)) is the PTS EIIC type-1 domain. A helical transmembrane segment spans residues 15–35 (SLMLPVSVLPIAGILLGVGSA). At 36-50 (NFSWLPAVVSHVMAE) the chain is on the periplasmic side. The helical transmembrane segment at 51–71 (AGGSVFANMPLIFAIGVALGF) threads the bilayer. Residues 72–79 (TNNDGVSA) lie on the Cytoplasmic side of the membrane. The chain crosses the membrane as a helical span at residues 80–100 (LAAVVAYGIMVKTMAVVAPLV). The Periplasmic segment spans residues 101 to 111 (LHLPAEEIASK). The chain crosses the membrane as a helical span at residues 112–132 (HLADTGVLGGIISGAIAAYMF). Residues 133–151 (NRFYRIKLPEYLGFFAGKR) are Cytoplasmic-facing. Residues 152–172 (FVPIISGLAAIFTGVVLSFIW) form a helical membrane-spanning segment. The Periplasmic segment spans residues 173-190 (PPIGSAIQTFSQWAAYQN). Residues 191–211 (PVVAFGIYGFIERCLVPFGLH) traverse the membrane as a helical segment. Over 212–249 (HIWNVPFQMQIGEYTNAAGQVFHGDIPRYMAGDPTAGK) the chain is Cytoplasmic. Residues 250 to 270 (LSGGFLFKMYGLPAAAIAIWH) traverse the membrane as a helical segment. Residues 271–279 (SAKPENRAK) lie on the Periplasmic side of the membrane. The helical transmembrane segment at 280–300 (VGGIMISAALTSFLTGITEPI) threads the bilayer. Topologically, residues 301–309 (EFSFMFVAP) are cytoplasmic. The helical transmembrane segment at 310–330 (ILYIIHAILAGLAFPICILLG) threads the bilayer. At 331–355 (MRDGTSFSHGLIDFIVLSGNSSKLW) the chain is on the periplasmic side. A helical membrane pass occupies residues 356-376 (LFPIVGIGYAIVYYTIFRVLI). Residues 377–477 (KALDLKTPGR…TEMDEYIRNH (101 aa)) are Cytoplasmic-facing. A PTS EIIB type-1 domain is found at 399 to 477 (SEMAPALVAA…TEMDEYIRNH (79 aa)). The active-site Phosphocysteinsyse intermediate; for EIIB activity is the Cys-421. Cys-421 is subject to Phosphocysteine.

The protein localises to the cell inner membrane. It catalyses the reaction N(pros)-phospho-L-histidyl-[protein] + D-glucose(out) = D-glucose 6-phosphate(in) + L-histidyl-[protein]. The phosphoenolpyruvate-dependent sugar phosphotransferase system (sugar PTS), a major carbohydrate active transport system, catalyzes the phosphorylation of incoming sugar substrates concomitantly with their translocation across the cell membrane. The enzyme II complex composed of PtsG and Crr is involved in glucose transport. Also functions as a chemoreceptor monitoring the environment for changes in sugar concentration. This Escherichia coli O6:H1 (strain CFT073 / ATCC 700928 / UPEC) protein is PTS system glucose-specific EIICB component (ptsG).